Consider the following 148-residue polypeptide: Early glycoprotein GP48 (148 aa).

Positions 1–21 (MMLRAWRLMVLLAAYCYYVFA) are cleaved as a signal peptide. 10 N-linked (GlcNAc...) asparagine; by host glycosylation sites follow: Asn-22, Asn-44, Asn-49, Asn-57, Asn-65, Asn-104, Asn-108, Asn-118, Asn-135, and Asn-144.

This sequence belongs to the RL11 family. In terms of processing, N-glycosylated and possibly O-glycosylated.

The protein resides in the virion membrane. The sequence is that of Early glycoprotein GP48 (UL4) from Homo sapiens (Human).